A 403-amino-acid chain; its full sequence is Sorting nexin-32 (403 aa).

In terms of domain architecture, PX spans L20 to S168. Positions N258–R335 form a coiled coil.

This sequence belongs to the sorting nexin family.

Its function is as follows. May be involved in several stages of intracellular trafficking. The sequence is that of Sorting nexin-32 (SNX32) from Homo sapiens (Human).